Reading from the N-terminus, the 295-residue chain is F-box only protein 8 (295 aa).

An F-box domain is found at 35–80 (TWVARYIPQDLLIEILTRLPPKSVMRFKCVSKFWSSLLSSRYFCNR).

This Arabidopsis thaliana (Mouse-ear cress) protein is F-box only protein 8 (FBX8).